A 497-amino-acid polypeptide reads, in one-letter code: Maintenance of mitochondrial morphology protein 1 (497 aa).

At 1–28 the chain is on the lumenal side; the sequence is MSSVLNPSSPHSWDLCCSSSSNRSYHRP. A helical transmembrane segment spans residues 29–55; that stretch reads THPIVGLLVGQLSVVLLIGAFIKFFIF. Residues 56 to 497 are Cytoplasmic-facing; the sequence is GEAPPSPSRS…GSLPDAVPIT (442 aa). Disordered stretches follow at residues 60–107, 284–330, 402–421, and 437–497; these read PSPS…SSST, ESST…STTG, TGVR…AAGV, and EMLH…VPIT. Residues 66-77 show a composition bias toward basic residues; sequence QTHRTSQHKRSY. Residues 81-94 are compositionally biased toward basic and acidic residues; it reads GARDLSPRTLKEKP. 3 stretches are compositionally biased toward polar residues: residues 95–107, 284–302, and 311–330; these read SSNV…SSST, ESST…NLRS, and PQES…STTG. An SMP-LTD domain is found at 140-393; the sequence is QPESLDWFNV…EPRVQVVALP (254 aa). The segment covering 412–421 has biased composition (low complexity); that stretch reads DVSSSDAAGV. Over residues 440–451 the composition is skewed to basic and acidic residues; the sequence is HAAREVDAEGLR. Positions 462–473 are enriched in polar residues; that stretch reads GSSSKYAQQNQS. Over residues 474–484 the composition is skewed to basic and acidic residues; that stretch reads SRERGRADDPF.

Belongs to the MMM1 family. As to quaternary structure, homodimer. Component of the ER-mitochondria encounter structure (ERMES) or MDM complex, composed of MMM1, MDM10, MDM12 and MDM34. An MMM1 homodimer associates with one molecule of MDM12 on each side in a pairwise head-to-tail manner, and the SMP-LTD domains of MMM1 and MDM12 generate a continuous hydrophobic tunnel for phospholipid trafficking.

The protein resides in the endoplasmic reticulum membrane. In terms of biological role, component of the ERMES/MDM complex, which serves as a molecular tether to connect the endoplasmic reticulum (ER) and mitochondria. Components of this complex are involved in the control of mitochondrial shape and protein biogenesis, and function in nonvesicular lipid trafficking between the ER and mitochondria. The MDM12-MMM1 subcomplex functions in the major beta-barrel assembly pathway that is responsible for biogenesis of all outer membrane beta-barrel proteins, and acts in a late step after the SAM complex. The MDM10-MDM12-MMM1 subcomplex further acts in the TOM40-specific pathway after the action of the MDM12-MMM1 complex. Essential for establishing and maintaining the structure of mitochondria and maintenance of mtDNA nucleoids. The protein is Maintenance of mitochondrial morphology protein 1 of Uncinocarpus reesii (strain UAMH 1704).